A 204-amino-acid chain; its full sequence is Protein phosphatase 1 regulatory subunit 1B (204 aa).

Methionine 1 is modified (N-acetylmethionine). The interval 1–204 is disordered; that stretch reads MDPKDRKKIQ…QRPSPSEPGT (204 aa). At threonine 34 the chain carries Phosphothreonine; by PKA. A compositionally biased stretch (basic and acidic residues) spans 41–63; it reads LSEHSSPEEEASPHQRASGEGHH. Residues serine 45 and serine 46 each carry the phosphoserine modification. Threonine 75 carries the phosphothreonine; by CDK5 modification. Positions 89–100 are enriched in polar residues; it reads HLQSISNLNENQ. Phosphoserine is present on serine 102. Over residues 109–118 the composition is skewed to basic and acidic residues; it reads GELRELGYPR. 2 stretches are compositionally biased toward acidic residues: residues 119 to 138 and 170 to 183; these read EEDE…EDSQ and DESE…DQVE. At serine 137 the chain carries Phosphoserine. At serine 198 the chain carries Phosphoserine.

It belongs to the protein phosphatase inhibitor 1 family. Dopamine- and cyclic AMP-regulated neuronal phosphoprotein. Post-translationally, phosphorylation of Thr-34 is required for activity.

It is found in the cytoplasm. Its function is as follows. Inhibitor of protein-phosphatase 1. This chain is Protein phosphatase 1 regulatory subunit 1B (PPP1R1B), found in Homo sapiens (Human).